We begin with the raw amino-acid sequence, 644 residues long: Zinc finger protein 568 (644 aa).

One can recognise a KRAB domain in the interval 48–119; sequence VTFKDVAVDL…EEEMFGRHCP (72 aa). 15 C2H2-type zinc fingers span residues 222–244, 250–272, 278–300, 306–328, 334–356, 362–384, 390–412, 418–440, 446–468, 474–496, 502–524, 530–552, 558–580, 586–608, and 614–636; these read FKCN…ERIH, YECK…QKIH, YKCN…HRIH, YACK…ERIH, YECK…EKIH, YACN…MRSH, YKCN…MRSH, YVCS…MRNH, YECS…QRIH, YACT…EKIH, YHCN…EKIH, FKCN…VRSH, YECN…MRSH, and FECN…KRGH.

It belongs to the krueppel C2H2-type zinc-finger protein family. As to quaternary structure, interacts with TRIM28.

The protein localises to the nucleus. Functionally, has transcriptional repression activity, partially through the recruitment of the corepressor TRIM28 but also has repression activity independently of this interaction. Essential during embryonic development, where it acts as a direct repressor of a placental-specific transcript of IGF2 in early development and regulates convergent extension movements required for axis elongation and tissue morphogenesis in all germ layers. Also important for normal morphogenesis of extraembryonic tissues including the yolk sac, extraembryonic mesoderm and placenta. May enhance proliferation or maintenance of neural stem cells. This Homo sapiens (Human) protein is Zinc finger protein 568 (ZNF568).